Here is a 228-residue protein sequence, read N- to C-terminus: 5'-methylthioadenosine/S-adenosylhomocysteine nucleosidase (228 aa).

Catalysis depends on Glu11, which acts as the Proton acceptor. Substrate is bound by residues Gly77, Ile151, and Met172 to Glu173. The Proton donor role is filled by Asp196.

It belongs to the PNP/UDP phosphorylase family. MtnN subfamily.

The catalysed reaction is S-adenosyl-L-homocysteine + H2O = S-(5-deoxy-D-ribos-5-yl)-L-homocysteine + adenine. It catalyses the reaction S-methyl-5'-thioadenosine + H2O = 5-(methylsulfanyl)-D-ribose + adenine. It carries out the reaction 5'-deoxyadenosine + H2O = 5-deoxy-D-ribose + adenine. It participates in amino-acid biosynthesis; L-methionine biosynthesis via salvage pathway; S-methyl-5-thio-alpha-D-ribose 1-phosphate from S-methyl-5'-thioadenosine (hydrolase route): step 1/2. Catalyzes the irreversible cleavage of the glycosidic bond in both 5'-methylthioadenosine (MTA) and S-adenosylhomocysteine (SAH/AdoHcy) to adenine and the corresponding thioribose, 5'-methylthioribose and S-ribosylhomocysteine, respectively. Also cleaves 5'-deoxyadenosine, a toxic by-product of radical S-adenosylmethionine (SAM) enzymes, into 5-deoxyribose and adenine. The protein is 5'-methylthioadenosine/S-adenosylhomocysteine nucleosidase of Staphylococcus aureus (strain bovine RF122 / ET3-1).